The following is a 492-amino-acid chain: Steroid 21-hydroxylase (492 aa).

Heme b contacts are provided by R91 and K120. Residue R231 coordinates 17alpha-hydroxyprogesterone. R231 is a progesterone binding site. H363, R424, and C426 together coordinate heme b.

It belongs to the cytochrome P450 family. Heme b is required as a cofactor.

The protein localises to the endoplasmic reticulum membrane. Its subcellular location is the microsome membrane. It catalyses the reaction 17alpha-hydroxyprogesterone + reduced [NADPH--hemoprotein reductase] + O2 = 11-deoxycortisol + oxidized [NADPH--hemoprotein reductase] + H2O + H(+). It carries out the reaction progesterone + reduced [NADPH--hemoprotein reductase] + O2 = 21-hydroxyprogesterone + oxidized [NADPH--hemoprotein reductase] + H2O + H(+). In terms of biological role, specifically catalyzes the 21-hydroxylation of steroids. Required for the adrenal synthesis of mineralocorticoids and glucocorticoids. The sequence is that of Steroid 21-hydroxylase (CYP21) from Canis lupus familiaris (Dog).